Reading from the N-terminus, the 371-residue chain is Probable RNA 3'-terminal phosphate cyclase-like protein (371 aa).

This sequence belongs to the RNA 3'-terminal cyclase family. Type 2 subfamily. Part of the small subunit (SSU) processome, composed of more than 70 proteins and the RNA chaperone small nucleolar RNA (snoRNA) U3.

Its subcellular location is the nucleus. It localises to the nucleolus. Its function is as follows. Part of the small subunit (SSU) processome, first precursor of the small eukaryotic ribosomal subunit. During the assembly of the SSU processome in the nucleolus, many ribosome biogenesis factors, an RNA chaperone and ribosomal proteins associate with the nascent pre-rRNA and work in concert to generate RNA folding, modifications, rearrangements and cleavage as well as targeted degradation of pre-ribosomal RNA by the RNA exosome. Does not have cyclase activity. The sequence is that of Probable RNA 3'-terminal phosphate cyclase-like protein (rcl1) from Dictyostelium discoideum (Social amoeba).